A 558-amino-acid polypeptide reads, in one-letter code: Membrane protein insertase YidC (558 aa).

The next 6 membrane-spanning stretches (helical) occupy residues 6–26 (VIAA…FFQP), 326–348 (LAID…DYFF), 355–377 (GLAI…NFSF), 424–444 (LPIL…FVTI), 469–489 (VFGL…WPII), and 512–532 (IFMF…AGLV).

It belongs to the OXA1/ALB3/YidC family. Type 1 subfamily. As to quaternary structure, interacts with the Sec translocase complex via SecD. Specifically interacts with transmembrane segments of nascent integral membrane proteins during membrane integration.

The protein localises to the cell inner membrane. Required for the insertion and/or proper folding and/or complex formation of integral membrane proteins into the membrane. Involved in integration of membrane proteins that insert both dependently and independently of the Sec translocase complex, as well as at least some lipoproteins. Aids folding of multispanning membrane proteins. The polypeptide is Membrane protein insertase YidC (Pelagibacter ubique (strain HTCC1062)).